Here is a 93-residue protein sequence, read N- to C-terminus: MAQEEKERIVIPDENGDEHLFDELFKFTVDETGKSYILLTPVGEEEGEEEEAEVFAFRFEDREGEENDIALFPIETDEEWDMVEEMLNTFSEE.

The protein belongs to the UPF0473 family.

The protein is UPF0473 protein BH1270 of Halalkalibacterium halodurans (strain ATCC BAA-125 / DSM 18197 / FERM 7344 / JCM 9153 / C-125) (Bacillus halodurans).